The chain runs to 110 residues: Large ribosomal subunit protein uL22 (110 aa).

It belongs to the universal ribosomal protein uL22 family. In terms of assembly, part of the 50S ribosomal subunit.

This protein binds specifically to 23S rRNA; its binding is stimulated by other ribosomal proteins, e.g. L4, L17, and L20. It is important during the early stages of 50S assembly. It makes multiple contacts with different domains of the 23S rRNA in the assembled 50S subunit and ribosome. Its function is as follows. The globular domain of the protein is located near the polypeptide exit tunnel on the outside of the subunit, while an extended beta-hairpin is found that lines the wall of the exit tunnel in the center of the 70S ribosome. In Pseudoalteromonas atlantica (strain T6c / ATCC BAA-1087), this protein is Large ribosomal subunit protein uL22.